A 64-amino-acid chain; its full sequence is Protein sigN173 (64 aa).

This chain is Protein sigN173, found in Dictyostelium discoideum (Social amoeba).